We begin with the raw amino-acid sequence, 76 residues long: MEKLTILLLVAAVLMSTQALVERAGENRSKENIKFLLKRKRAADRGMWGKCKDGLTTCLAPSECCSGNCEQNCKMW.

The N-terminal stretch at 1 to 19 (MEKLTILLLVAAVLMSTQA) is a signal peptide. A propeptide spanning residues 20-45 (LVERAGENRSKENIKFLLKRKRAADR) is cleaved from the precursor. Cystine bridges form between C51-C65, C58-C69, and C64-C73.

Belongs to the conotoxin O2 superfamily. Expressed by the venom duct.

Its subcellular location is the secreted. This chain is Conotoxin TxMEKL-011, found in Conus textile (Cloth-of-gold cone).